A 191-amino-acid polypeptide reads, in one-letter code: Probable nicotinate-nucleotide adenylyltransferase (191 aa).

Belongs to the NadD family.

It catalyses the reaction nicotinate beta-D-ribonucleotide + ATP + H(+) = deamido-NAD(+) + diphosphate. It participates in cofactor biosynthesis; NAD(+) biosynthesis; deamido-NAD(+) from nicotinate D-ribonucleotide: step 1/1. In terms of biological role, catalyzes the reversible adenylation of nicotinate mononucleotide (NaMN) to nicotinic acid adenine dinucleotide (NaAD). The chain is Probable nicotinate-nucleotide adenylyltransferase from Oceanobacillus iheyensis (strain DSM 14371 / CIP 107618 / JCM 11309 / KCTC 3954 / HTE831).